Consider the following 362-residue polypeptide: MKRTIMTNTDTFEQPNTGANEESLRMVSAAPVGNEPVSDEELRPHILEGFIGQPRLKAQLQLFLDAARKRDVPPDHILLAGPPGLGKTTLAMIVANELEVPIRVTSGPAIQHAGDLASILSSLDAGEVLFIDEIHRLPRAAEELLYIAMEDFRVDVMVGKGPGASSIPLTLPRFTVIGATTREGMLPSPLRARFGFTAHLDFYPHEELEKLIERSSAVLGIQLEDGAARQLAMRSRGTPRIANRLLRRVRDWAIVHDLESVRPDDVKEALALYQIDTEGLDRLDIAVLKAIVTNFNGGPVGLNNLAAMVGEESETVETVCEPYLVREGFLIRTPKGRVATRKAWEHLGITPDESAYDVNEMS.

The disordered stretch occupies residues 1–20 (MKRTIMTNTDTFEQPNTGAN). Positions 15–203 (PNTGANEESL…FGFTAHLDFY (189 aa)) are large ATPase domain (RuvB-L). Residues leucine 42, arginine 43, glycine 84, lysine 87, threonine 88, threonine 89, 150–152 (EDF), arginine 193, tyrosine 203, and arginine 240 contribute to the ATP site. Threonine 88 is a binding site for Mg(2+). The segment at 204 to 274 (PHEELEKLIE…DVKEALALYQ (71 aa)) is small ATPAse domain (RuvB-S). The tract at residues 277-362 (TEGLDRLDIA…ESAYDVNEMS (86 aa)) is head domain (RuvB-H). Residues arginine 332 and arginine 337 each coordinate DNA.

Belongs to the RuvB family. Homohexamer. Forms an RuvA(8)-RuvB(12)-Holliday junction (HJ) complex. HJ DNA is sandwiched between 2 RuvA tetramers; dsDNA enters through RuvA and exits via RuvB. An RuvB hexamer assembles on each DNA strand where it exits the tetramer. Each RuvB hexamer is contacted by two RuvA subunits (via domain III) on 2 adjacent RuvB subunits; this complex drives branch migration. In the full resolvosome a probable DNA-RuvA(4)-RuvB(12)-RuvC(2) complex forms which resolves the HJ.

Its subcellular location is the cytoplasm. The enzyme catalyses ATP + H2O = ADP + phosphate + H(+). The RuvA-RuvB-RuvC complex processes Holliday junction (HJ) DNA during genetic recombination and DNA repair, while the RuvA-RuvB complex plays an important role in the rescue of blocked DNA replication forks via replication fork reversal (RFR). RuvA specifically binds to HJ cruciform DNA, conferring on it an open structure. The RuvB hexamer acts as an ATP-dependent pump, pulling dsDNA into and through the RuvAB complex. RuvB forms 2 homohexamers on either side of HJ DNA bound by 1 or 2 RuvA tetramers; 4 subunits per hexamer contact DNA at a time. Coordinated motions by a converter formed by DNA-disengaged RuvB subunits stimulates ATP hydrolysis and nucleotide exchange. Immobilization of the converter enables RuvB to convert the ATP-contained energy into a lever motion, pulling 2 nucleotides of DNA out of the RuvA tetramer per ATP hydrolyzed, thus driving DNA branch migration. The RuvB motors rotate together with the DNA substrate, which together with the progressing nucleotide cycle form the mechanistic basis for DNA recombination by continuous HJ branch migration. Branch migration allows RuvC to scan DNA until it finds its consensus sequence, where it cleaves and resolves cruciform DNA. This chain is Holliday junction branch migration complex subunit RuvB, found in Bifidobacterium adolescentis (strain ATCC 15703 / DSM 20083 / NCTC 11814 / E194a).